The following is a 221-amino-acid chain: Glutathione S-transferase Z1 (221 aa).

Residues 7 to 88 (EKLKLYSYWR…YLDEKYPEPP (82 aa)) form the GST N-terminal domain. Glutathione-binding positions include 17-18 (SS), 17-22 (SSCAHR), glutamine 46, 46-47 (QF), 59-60 (TV), valine 60, 72-73 (DS), glutamine 112, and 116-118 (NLA). The GST C-terminal domain occupies 93 to 218 (DLHKRAVNYQ…LPEKQPDAPS (126 aa)).

Belongs to the GST superfamily. Zeta family. As to quaternary structure, homodimer.

Its subcellular location is the cytoplasm. The protein resides in the cytosol. It carries out the reaction RX + glutathione = an S-substituted glutathione + a halide anion + H(+). In terms of biological role, acts a maleylacetone isomerase. Also catalyzes the glutathione-dependent dehalogenation of dichloroacetic acid to glyoxylic acid. In vitro, possesses glutathione peroxidase activity toward cumene hydroperoxide and linoleic acid-13-hydroperoxide. This Arabidopsis thaliana (Mouse-ear cress) protein is Glutathione S-transferase Z1 (GSTZ1).